The sequence spans 370 residues: Ubiquinone biosynthesis O-methyltransferase, mitochondrial (370 aa).

The transit peptide at 1–86 (MWRGGRLGSR…TYRTPWKRLY (86 aa)) directs the protein to the mitochondrion. S-adenosyl-L-methionine is bound at residue R125. An N6-acetyllysine mark is found at K144 and K150. Residues G155 and D176 each contribute to the S-adenosyl-L-methionine site. At K197 the chain carries N6-acetyllysine. Residue S223 participates in S-adenosyl-L-methionine binding. E224, E227, and H228 together coordinate Mg(2+). Residues 336 to 370 (AQEHQEPAESALKGETGALHANTSGSPSVREEQRT) form a disordered region.

Belongs to the class I-like SAM-binding methyltransferase superfamily. UbiG/COQ3 family. Component of a multi-subunit COQ enzyme complex, composed of at least COQ3, COQ4, COQ5, COQ6, COQ7 and COQ9. It depends on Mg(2+) as a cofactor.

The protein resides in the mitochondrion inner membrane. The catalysed reaction is 3,4-dihydroxy-5-(all-trans-decaprenyl)benzoate + S-adenosyl-L-methionine = 4-hydroxy-3-methoxy-5-(all-trans-decaprenyl)benzoate + S-adenosyl-L-homocysteine + H(+). It catalyses the reaction a 3-demethylubiquinone + S-adenosyl-L-methionine = a ubiquinone + S-adenosyl-L-homocysteine. It carries out the reaction 3-demethylubiquinol-10 + S-adenosyl-L-methionine = ubiquinol-10 + S-adenosyl-L-homocysteine + H(+). It participates in cofactor biosynthesis; ubiquinone biosynthesis. Its function is as follows. O-methyltransferase required for two non-consecutive steps during ubiquinone biosynthesis. Catalyzes the 2 O-methylation of 3,4-dihydroxy-5-(all-trans-decaprenyl)benzoic acid into 4-hydroxy-3-methoxy-5-(all-trans-decaprenyl)benzoic acid. Also catalyzes the last step of ubiquinone biosynthesis by mediating methylation of 3-demethylubiquinone into ubiquinone. Also able to mediate the methylation of 3-demethylubiquinol-10 into ubiquinol-10. The protein is Ubiquinone biosynthesis O-methyltransferase, mitochondrial of Mus musculus (Mouse).